The chain runs to 262 residues: Spindlin-1 (262 aa).

Residues 1–49 (MKTPFGKTPGQRSRADAGHAGVSANMMKKRTSHKKHRTSVGPSKPVSQP) are disordered. Residues K7 and K28 each participate in a glycyl lysine isopeptide (Lys-Gly) (interchain with G-Cter in SUMO2) cross-link. Positions 27–38 (MKKRTSHKKHRT) are enriched in basic residues. N6-acetyllysine; alternate is present on K44. A Glycyl lysine isopeptide (Lys-Gly) (interchain with G-Cter in SUMO2); alternate cross-link involves residue K44. A tudor-like domain 1 region spans residues 53–116 (IVGCRIQHGW…RVSALEVLPD (64 aa)). The tract at residues 93–98 (GFDCVY) is histone H3K4me3 and H3R8me2a binding. Phosphoserine; by AURKA is present on residues S109 and S124. The tudor-like domain 2 stretch occupies residues 132-193 (MIGKAVEHMF…DYKEGDLRIM (62 aa)). Residue E142 is a region of interest, histone H3K4me3 and H3R8me2a binding. Phosphoserine is present on S199. Residues 213–262 (LVGKQVEYAKEDGSKRTGMVIHQVEAKPSVYFIKFDDDFHIYVYDLVKTS) are tudor-like domain 3. Residues 250-252 (DFH) are histone H3K4me3 and H3R8me2a binding.

The protein belongs to the SPIN/STSY family. Homodimer; may form higher-order oligomers. Interacts with TCF7L2/TCF4; the interaction is direct. Interacts with HABP4 and SERBP1. Interacts with SPINDOC; SPINDOC stabilizes SPIN1 and enhances its association with bivalent H3K4me3K9me3 mark. Interacts with SPOCD1; promoting recruitment of PIWIL4 and SPOCD1 to transposons. Post-translationally, phosphorylated during oocyte meiotic maturation.

It localises to the nucleus. Its subcellular location is the nucleolus. Its function is as follows. Chromatin reader that specifically recognizes and binds histone H3 both trimethylated at 'Lys-4' and 'Lys-9' (H3K4me3K9me3) and is involved in piRNA-mediated retrotransposon silencing during spermatogenesis. Plays a key role in the initiation of the PIWIL4-piRNA pathway, a pathway that directs transposon DNA methylation and silencing in the male embryonic germ cells, by promoting recruitment of DNA methylation machinery to transposons: binds young, but not old, LINE1 transposons, which are specifically marked with H3K4me3K9me3, and promotes the recruitment of PIWIL4 and SPOCD1 to transposons, leading to piRNA-directed DNA methylation. Also recognizes and binds histone H3 both trimethylated at 'Lys-4' and asymmetrically dimethylated at 'Arg-8' (H3K4me3 and H3R8me2a) and acts as an activator of Wnt signaling pathway downstream of PRMT2. Overexpression induces metaphase arrest and chromosomal instability. Overexpression induces metaphase arrest and chromosomal instability. Localizes to active rDNA loci and promotes the expression of rRNA genes. May play a role in cell-cycle regulation during the transition from gamete to embryo. Involved in oocyte meiotic resumption, a process that takes place before ovulation to resume meiosis of oocytes blocked in prophase I: may act by regulating maternal transcripts to control meiotic resumption. In Rattus norvegicus (Rat), this protein is Spindlin-1 (Spin1).